The following is a 229-amino-acid chain: Prolactin (229 aa).

Residues 1 to 30 (MDKKGWSLKGSLLPLLLLVSDLLLCQSVAS) form the signal peptide. An intrachain disulfide couples Cys34 to Cys41. 3 positions are modified to phosphoserine: Ser56, Ser64, and Ser120. 2 disulfides stabilise this stretch: Cys88-Cys204 and Cys221-Cys229.

It belongs to the somatotropin/prolactin family. As to quaternary structure, interacts with PRLR.

It localises to the secreted. Functionally, prolactin acts primarily on the mammary gland by promoting lactation. The sequence is that of Prolactin (PRL) from Ailuropoda melanoleuca (Giant panda).